Consider the following 108-residue polypeptide: FK506-binding protein 1 (108 aa).

The disordered stretch occupies residues 1-20 (MGVTVETIQPGDGKNFPKKG). One can recognise a PPIase FKBP-type domain in the interval 20–108 (GDTVTMHYTG…NFEVELLKIN (89 aa)).

Belongs to the FKBP-type PPIase family. FKBP1 subfamily.

The protein resides in the cytoplasm. The catalysed reaction is [protein]-peptidylproline (omega=180) = [protein]-peptidylproline (omega=0). Its activity is regulated as follows. Inhibited by both FK506 and rapamycin. PPIases accelerate the folding of proteins. It catalyzes the cis-trans isomerization of proline imidic peptide bonds in oligopeptides. This Rhizopus delemar (strain RA 99-880 / ATCC MYA-4621 / FGSC 9543 / NRRL 43880) (Mucormycosis agent) protein is FK506-binding protein 1 (FKBP1).